Here is a 66-residue protein sequence, read N- to C-terminus: Phylloseptin-H5 (66 aa).

A signal peptide spans 1-22; it reads MAFLKKSLFLVLFLGLVSLSIC. The propeptide occupies 23–44; that stretch reads EEEKRETEEEENEQEDDDKSEE. Positions 24 to 44 are disordered; the sequence is EEKRETEEEENEQEDDDKSEE. The span at 30–41 shows a compositional bias: acidic residues; the sequence is EEEENEQEDDDK. Phe65 is subject to Phenylalanine amide.

As to expression, expressed by the skin glands.

The protein localises to the secreted. In terms of biological role, has antibacterial activity against the Gram-negative bacteria E.coli and P.aeruginosa, and the Gram-positive bacterium S.aureus. No hemolytic activity. This Pithecopus hypochondrialis (Orange-legged leaf frog) protein is Phylloseptin-H5 (psn7).